A 332-amino-acid polypeptide reads, in one-letter code: MKSNLENLNFQTSIREQVVPSRKKVKLPAWLEVAKPRLIPLLLATTLGGMALTEEWPLSSPKLICTLGGGALAAAAAGALNCLWEMDLDKRMKRTSDRALPSGKLSFNTVFLGAVSCTLAAAMLLISGVNYLAAGLTLLGLCSYVILYTIILKPRTTQNIVFGGVAGAIPPLVGASAATGHVGLSGWWLFSLVMLWTPAHFWALAILLKDDYASVGIPMLPSVKGSEFTVKAISRYGWATVFMSILGVFALPEGGILYLIMLLPFNGRLLQLINRLKSSPDDLEKAKGLFRWSILYMFGICLLLLISRTQLSVDFEHQSMQMFLSLKAYFNY.

The next 7 helical transmembrane spans lie at 63-83 (LICT…LNCL), 109-129 (TVFL…ISGV), 132-152 (LAAG…TIIL), 160-180 (IVFG…AATG), 188-208 (WLFS…AILL), 245-265 (ILGV…LLPF), and 286-306 (AKGL…LLLI).

It belongs to the UbiA prenyltransferase family. Protoheme IX farnesyltransferase subfamily.

It is found in the cell inner membrane. The enzyme catalyses heme b + (2E,6E)-farnesyl diphosphate + H2O = Fe(II)-heme o + diphosphate. Its pathway is porphyrin-containing compound metabolism; heme O biosynthesis; heme O from protoheme: step 1/1. In terms of biological role, converts heme B (protoheme IX) to heme O by substitution of the vinyl group on carbon 2 of heme B porphyrin ring with a hydroxyethyl farnesyl side group. This is Protoheme IX farnesyltransferase from Prochlorococcus marinus subsp. pastoris (strain CCMP1986 / NIES-2087 / MED4).